A 366-amino-acid polypeptide reads, in one-letter code: Inactive protein RESTRICTED TEV MOVEMENT 2 (366 aa).

Positions 14–121 (VQYEDFVPKS…LPETSRTEAA (108 aa)) constitute a sHSP domain. One copy of the A-1 repeat lies at 129-133 (LEEKR). Residues 129–220 (LEEKRLLEES…LEERRLEERK (92 aa)) are 6 X 5 AA repeats A of L-E-E-[SKR]-[ERK]. Residues 135–139 (LEESR) form an A-2 repeat. The A-3 repeat unit spans residues 156–160 (LEEKE). One copy of the B-1 repeat lies at 163–176 (IRKLQEEAKAKEEA). Residues 163-206 (IRKLQEEAKAKEEAEMRKLQEEAKANEEAAAKKLQEEIEAKEKL) form a 3 X 14 AA repeats B of [IMA]-[RK]-K-L-Q-E-E-A-K-A-K-E-[EK]-[LA] region. The stretch at 178-191 (MRKLQEEAKANEEA) is one B-2 repeat. One copy of the B-3 repeat lies at 193 to 205 (AKKLQEEIEAKEK). The A-4 repeat unit spans residues 206–210 (LEERK). An A-5 repeat occupies 211–215 (LEERR). The A-6 repeat unit spans residues 216 to 220 (LEERK). Residues 322-342 (LMMNVGVAALVIFALGAYVSY) form a helical membrane-spanning segment. Residues 345 to 366 (CSSSSSSSSSSPSSSSSSTKPE) form a disordered region. Low complexity predominate over residues 346-366 (SSSSSSSSSSPSSSSSSTKPE).

This sequence belongs to the small heat shock protein (HSP20) family.

Its subcellular location is the cell membrane. Its function is as follows. Seems to not be involved in heat resistance. Unable to mediate restriction of long-distance movement of the pathogenic tobacco etch virus (TEV) without causing a hypersensitive response or inducing systemic acquired resistance. The sequence is that of Inactive protein RESTRICTED TEV MOVEMENT 2 (RTM2) from Arabidopsis thaliana (Mouse-ear cress).